The following is a 365-amino-acid chain: Testis-specific serine/threonine-protein kinase 1 (365 aa).

The 261-residue stretch at 12-272 (YIMGINLGEG…IDEILNHCWV (261 aa)) folds into the Protein kinase domain. ATP is bound by residues 18-26 (LGEGSYAKV) and Lys-41. Asp-136 serves as the catalytic Proton acceptor. Position 174 is a phosphothreonine (Thr-174). A disordered region spans residues 282–365 (GAINKEGESS…HPQQPSETHT (84 aa)). Positions 303 to 330 (GADKKSATKLEPREEARSEARSESKPQE) are enriched in basic and acidic residues. Over residues 331–347 (DTLQVVRQSENVGLSSE) the composition is skewed to polar residues.

This sequence belongs to the protein kinase superfamily. CAMK Ser/Thr protein kinase family. As to quaternary structure, interacts with TSSK2. Interacts with HSP90; this interaction stabilizes TSSK1. Mg(2+) is required as a cofactor. Autophosphorylated. In terms of processing, ubiquitinated; HSP90 activity negatively regulates ubiquitination and degradation. Testis-specific. Expressed only in postmeiotic spermatids at the final stages of cytodifferentiation in the seminiferous tubules (at protein level). Not detected in released sperms in the lumen of the seminiferous tubules and the epididymis.

The protein resides in the cytoplasm. It localises to the cytoplasmic vesicle. Its subcellular location is the secretory vesicle. The protein localises to the acrosome. It is found in the cell projection. The protein resides in the cilium. It localises to the flagellum. The enzyme catalyses L-seryl-[protein] + ATP = O-phospho-L-seryl-[protein] + ADP + H(+). It catalyses the reaction L-threonyl-[protein] + ATP = O-phospho-L-threonyl-[protein] + ADP + H(+). With respect to regulation, activated by phosphorylation on Thr-174, potentially by autophosphorylation. Its function is as follows. Testis-specific serine/threonine-protein kinase required during spermatid development. Phosphorylates 'Ser-281' of TSKS. Involved in the late stages of spermatogenesis, during the reconstruction of the cytoplasm. During spermatogenesis, required for the transformation of a ring-shaped structure around the base of the flagellum originating from the chromatoid body. In Mus musculus (Mouse), this protein is Testis-specific serine/threonine-protein kinase 1 (Tssk1b).